A 180-amino-acid polypeptide reads, in one-letter code: MPLLNSVTTPYAEALLQVVNENLQTEEMVSEVKQLLELLNDSPELEKALSSPILETEAKKKIIIEIFSNKVNSSLLNFLKLLADRQRIGILTSILNRFLEIYRENSNIALATVTSAVELTDEQKGLITQKIVNIAGTQKLELVTKIDPSLIGGFVASVGSKVIDASLASQIRKLGLSLSK.

Belongs to the ATPase delta chain family. As to quaternary structure, F-type ATPases have 2 components, F(1) - the catalytic core - and F(0) - the membrane proton channel. F(1) has five subunits: alpha(3), beta(3), gamma(1), delta(1), epsilon(1). CF(0) has four main subunits: a(1), b(1), b'(1) and c(10-14). The alpha and beta chains form an alternating ring which encloses part of the gamma chain. F(1) is attached to F(0) by a central stalk formed by the gamma and epsilon chains, while a peripheral stalk is formed by the delta, b and b' chains.

It localises to the cellular thylakoid membrane. In terms of biological role, f(1)F(0) ATP synthase produces ATP from ADP in the presence of a proton or sodium gradient. F-type ATPases consist of two structural domains, F(1) containing the extramembraneous catalytic core and F(0) containing the membrane proton channel, linked together by a central stalk and a peripheral stalk. During catalysis, ATP synthesis in the catalytic domain of F(1) is coupled via a rotary mechanism of the central stalk subunits to proton translocation. Its function is as follows. This protein is part of the stalk that links CF(0) to CF(1). It either transmits conformational changes from CF(0) to CF(1) or is implicated in proton conduction. The sequence is that of ATP synthase subunit delta from Prochlorococcus marinus (strain MIT 9312).